A 310-amino-acid polypeptide reads, in one-letter code: MEYPAPAAVQAADGGGAGPYNSSELLEGQEPDGVRFDRERARRLWEAVSGAQPVGREEVEHMIQKNQCLFTNTQCKVCCALLISESQKLAHYQSKKHANKVKRYLAIHGMETLKGETKKLDSDQKSSRSKDKNQCCPICNMTFSSPVVAQSHYLGKTHAKNLKLKQQSTKVEALSKRLTNPFLVASTLALHQNREMIDPDKFCSLCHATFNDPVMAQQHYVGKKHRKQETKLKLMARYGRLADPAVTDFPAGKGYPCKTCKIVLNSIEQYQAHVSGFKHKNQSPKTVASSLGQIPMQRQPIQKDSTTLED.

Met1 carries the post-translational modification N-acetylmethionine. Low complexity predominate over residues 1–12 (MEYPAPAAVQAA). The segment at 1-33 (MEYPAPAAVQAADGGGAGPYNSSELLEGQEPDG) is disordered. The segment at 70–104 (FTNTQCKVCCALLISESQKLAHYQSKKHANKVKRY) adopts a Matrin-type 1 zinc-finger fold. 4 residues coordinate Zn(2+): Cys75, Cys78, His91, and His97. A Glycyl lysine isopeptide (Lys-Gly) (interchain with G-Cter in SUMO2) cross-link involves residue Lys114. A Matrin-type 2 zinc finger spans residues 131-165 (DKNQCCPICNMTFSSPVVAQSHYLGKTHAKNLKLK). Residues Cys136, Cys139, His152, and His158 each coordinate Zn(2+). A Glycyl lysine isopeptide (Lys-Gly) (interchain with G-Cter in SUMO2) cross-link involves residue Lys170. 2 Matrin-type zinc fingers span residues 198–232 (DPDKFCSLCHATFNDPVMAQQHYVGKKHRKQETKL) and 252–286 (GKGYPCKTCKIVLNSIEQYQAHVSGFKHKNQSPKT). The disordered stretch occupies residues 278 to 310 (KHKNQSPKTVASSLGQIPMQRQPIQKDSTTLED). Polar residues-rich tracts occupy residues 283–292 (SPKTVASSLG) and 299–310 (QPIQKDSTTLED).

Forms a heteromeric complex with XPO5 and ILF3. Found in a nuclear export complex with XPO5, RAN, ILF3, ZNF346 and double-stranded RNA. Interacts with XPO5. Interacts with ILF3 in an RNA-independent manner.

Its subcellular location is the nucleus. The protein resides in the nucleolus. It is found in the cytoplasm. Its function is as follows. Binds with low affinity to dsDNA and ssRNA, and with high affinity to dsRNA, with no detectable sequence specificity. The polypeptide is Zinc finger protein 346 (ZNF346) (Pongo abelii (Sumatran orangutan)).